The following is a 751-amino-acid chain: Photosystem I P700 chlorophyll a apoprotein A1 (751 aa).

A run of 8 helical transmembrane segments spans residues 73 to 96 (VFSA…FHGA), 159 to 182 (LYTT…FHYH), 198 to 222 (LNHH…HVSL), 294 to 312 (TVHH…GHQY), 349 to 372 (WHAQ…HHMY), 388 to 414 (LSLF…IFMV), 436 to 458 (AMIS…LYIH), and 533 to 551 (FMVH…LILL). Positions 575 and 584 each coordinate [4Fe-4S] cluster. 2 helical membrane-spanning segments follow: residues 591–612 (HVFL…HFSW) and 665–687 (LSAY…MFLF). A chlorophyll a'-binding site is contributed by histidine 676. Chlorophyll a-binding residues include methionine 684 and tyrosine 692. Residue tryptophan 693 participates in phylloquinone binding. A helical membrane pass occupies residues 725-745 (AVGVAHYLLGGIATTWSFFLA).

The protein belongs to the PsaA/PsaB family. In terms of assembly, the PsaA/B heterodimer binds the P700 chlorophyll special pair and subsequent electron acceptors. PSI consists of a core antenna complex that captures photons, and an electron transfer chain that converts photonic excitation into a charge separation. The eukaryotic PSI reaction center is composed of at least 11 subunits. It depends on P700 is a chlorophyll a/chlorophyll a' dimer, A0 is one or more chlorophyll a, A1 is one or both phylloquinones and FX is a shared 4Fe-4S iron-sulfur center. as a cofactor.

Its subcellular location is the plastid. It is found in the chloroplast thylakoid membrane. The catalysed reaction is reduced [plastocyanin] + hnu + oxidized [2Fe-2S]-[ferredoxin] = oxidized [plastocyanin] + reduced [2Fe-2S]-[ferredoxin]. In terms of biological role, psaA and PsaB bind P700, the primary electron donor of photosystem I (PSI), as well as the electron acceptors A0, A1 and FX. PSI is a plastocyanin/cytochrome c6-ferredoxin oxidoreductase, converting photonic excitation into a charge separation, which transfers an electron from the donor P700 chlorophyll pair to the spectroscopically characterized acceptors A0, A1, FX, FA and FB in turn. Oxidized P700 is reduced on the lumenal side of the thylakoid membrane by plastocyanin or cytochrome c6. The polypeptide is Photosystem I P700 chlorophyll a apoprotein A1 (Chlorella vulgaris (Green alga)).